The chain runs to 191 residues: Syndecan-2-A (191 aa).

An N-terminal signal peptide occupies residues 1–22 (MRNVWLIVPFALLAALSGETWA). Over 23–137 (QADRDLYIDS…NLFHRTEVLA (115 aa)) the chain is Extracellular. The disordered stretch occupies residues 32–60 (STESSGNYPVDDDDYSSGSGSGIPARGDD). Ser-36, Ser-48, Ser-50, and Ser-52 each carry an O-linked (Xyl...) (glycosaminoglycan) serine glycan. Residues 138–158 (AVIAGGGIGFLFAVFLILLLV) form a helical membrane-spanning segment. Over 159 to 191 (YRMRKKDEGSYDLGERKPSSAVYQKAPTKEFYA) the chain is Cytoplasmic. The interval 168–191 (SYDLGERKPSSAVYQKAPTKEFYA) is disordered.

Belongs to the syndecan proteoglycan family. In terms of processing, O-glycosylated; contains both heparan sulfate and chondroitin sulfate.

Its subcellular location is the membrane. Functionally, cell surface proteoglycan. The protein is Syndecan-2-A (sdc2-a) of Xenopus laevis (African clawed frog).